Reading from the N-terminus, the 616-residue chain is MALLQISEPGLSAAPHQRRLAAGIDLGTTNSLVATVRSGQAETLPDHEGRHLLPSVVHYQQQGHTVGYAARDNAAQDTANTISSVKRMMGRSLADIQARYPHLPYRFKASVNGLPMIDTAAGLLNPVRVSADILKALAARASESLSGELDGVVITVPAYFDDAQRQGTKDAARLAGLHVLRLLNEPTAAAIAYGLDSGKEGVIAVYDLGGGTFDISILRLSRGVFEVLATGGDSALGGDDFDHLLADYIREQAGIADRSDNRVQRELLDAAIAAKIALSDADTVRVNVAGWQGEITREQFNDLISALVKRTLLACRRALKDAGVDPQDVLEVVMVGGSTRVPLVRERVGEFFGRTPLTAIDPDKVVAIGAAIQADILVGNKPDSEMLLLDVIPLSLGLETMGGLVEKVIPRNTTIPVARAQDFTTFKDGQTAMSIHVMQGERELVQDCRSLARFALRGIPPLPAGGAHIRVTFQVDADGLLSVTAMEKSTGVEASIQVKPSYGLTDGEIASMIKDSMSFAEQDVKARMLAEQKVEAARVLESLTGALTADAALLSAAERQCIDDAAAHLSAVAQGDDVDAIEQAIKNVDKQTQEFAARRMDQSVRRALKGHSVDEV.

This sequence belongs to the heat shock protein 70 family.

Chaperone involved in the maturation of iron-sulfur cluster-containing proteins. Has a low intrinsic ATPase activity which is markedly stimulated by HscB. Involved in the maturation of IscU. The sequence is that of Chaperone protein HscA from Salmonella enteritidis PT4 (strain P125109).